The sequence spans 280 residues: uncharacterized protein (280 aa).

3 consecutive transmembrane segments (helical) span residues 10 to 29 (IQQN…LLFN), 164 to 186 (FVFV…FAFI), and 209 to 228 (IFGL…YFLL).

It is found in the cell membrane. This is an uncharacterized protein from Bacillus subtilis (strain 168).